The primary structure comprises 473 residues: Trehalose-6-phosphate synthase (473 aa).

Position 10 (R10) interacts with D-glucose 6-phosphate. 21–22 (GG) serves as a coordination point for UDP-alpha-D-glucose. The D-glucose 6-phosphate site is built by Y76 and D130. Residues R262 and K267 each contribute to the UDP-alpha-D-glucose site. R300 lines the D-glucose 6-phosphate pocket. Residues F339 and 365-369 (LVAKE) each bind UDP-alpha-D-glucose. A disordered region spans residues 454–473 (TPRSPERQQQNNVATFPKLA).

It belongs to the glycosyltransferase 20 family. As to quaternary structure, homotetramer.

The catalysed reaction is D-glucose 6-phosphate + UDP-alpha-D-glucose = alpha,alpha-trehalose 6-phosphate + UDP + H(+). Its pathway is glycan biosynthesis; trehalose biosynthesis. Its function is as follows. Probably involved in the osmoprotection via the biosynthesis of trehalose. Catalyzes the transfer of glucose from UDP-alpha-D-glucose (UDP-Glc) to D-glucose 6-phosphate (Glc-6-P) to form trehalose-6-phosphate. Acts with retention of the anomeric configuration of the UDP-sugar donor. This chain is Trehalose-6-phosphate synthase, found in Salmonella paratyphi A (strain ATCC 9150 / SARB42).